The following is a 211-amino-acid chain: ATP phosphoribosyltransferase (211 aa).

Belongs to the ATP phosphoribosyltransferase family. Short subfamily. As to quaternary structure, heteromultimer composed of HisG and HisZ subunits.

The protein localises to the cytoplasm. It carries out the reaction 1-(5-phospho-beta-D-ribosyl)-ATP + diphosphate = 5-phospho-alpha-D-ribose 1-diphosphate + ATP. It participates in amino-acid biosynthesis; L-histidine biosynthesis; L-histidine from 5-phospho-alpha-D-ribose 1-diphosphate: step 1/9. Catalyzes the condensation of ATP and 5-phosphoribose 1-diphosphate to form N'-(5'-phosphoribosyl)-ATP (PR-ATP). Has a crucial role in the pathway because the rate of histidine biosynthesis seems to be controlled primarily by regulation of HisG enzymatic activity. In Bacillus cereus (strain G9842), this protein is ATP phosphoribosyltransferase.